The sequence spans 84 residues: UPF0291 protein EUBELI_00985 (84 aa).

The protein belongs to the UPF0291 family.

It is found in the cytoplasm. This Lachnospira eligens (strain ATCC 27750 / DSM 3376 / VPI C15-48 / C15-B4) (Eubacterium eligens) protein is UPF0291 protein EUBELI_00985.